Consider the following 175-residue polypeptide: T-cell surface glycoprotein CD3 epsilon chain (175 aa).

The signal sequence occupies residues 1-21 (MRCEVPLPLLGLLLCVVGAAA). Topologically, residues 22 to 100 (QGGQEEFAVE…VCANCEELDT (79 aa)) are extracellular. The helical transmembrane segment at 101 to 121 (FTVVGIIAADLLITLGVLILV) threads the bilayer. Over 122 to 175 (YYFSKNKKGQSRAAAGSRPRAQKMRRPPPVPNPDYEPIRKGQRDVYAGLEHRGF) the chain is Cytoplasmic. Positions 133–163 (RAAAGSRPRAQKMRRPPPVPNPDYEPIRKGQ) are disordered. An ITAM domain is found at 146–173 (RRPPPVPNPDYEPIRKGQRDVYAGLEHR).

As to quaternary structure, the TCR/CD3 complex of T-lymphocytes consists of either a TCR alpha/beta or TCR gamma/delta heterodimer coexpressed at the cell surface with the invariant subunits of CD3 labeled gamma, delta, epsilon, zeta, and eta.

The protein resides in the cell membrane. In terms of biological role, the CD3 complex mediates signal transduction, resulting in T-cell activation and proliferation. Required for normal immune responses. The sequence is that of T-cell surface glycoprotein CD3 epsilon chain (CD3E) from Gallus gallus (Chicken).